Consider the following 428-residue polypeptide: D-amino acid dehydrogenase (428 aa).

Residue 3–17 (VVVLGSGVVGVTSAY) participates in FAD binding.

Belongs to the DadA oxidoreductase family. Requires FAD as cofactor.

It carries out the reaction a D-alpha-amino acid + A + H2O = a 2-oxocarboxylate + AH2 + NH4(+). It participates in amino-acid degradation; D-alanine degradation; NH(3) and pyruvate from D-alanine: step 1/1. Oxidative deamination of D-amino acids. This is D-amino acid dehydrogenase from Paraburkholderia phytofirmans (strain DSM 17436 / LMG 22146 / PsJN) (Burkholderia phytofirmans).